Here is an 86-residue protein sequence, read N- to C-terminus: Neurotoxin LmNaTx34.2 (86 aa).

The first 18 residues, 1 to 18 (MKTLILVVIALMVIEVKS), serve as a signal peptide directing secretion. An LCN-type CS-alpha/beta domain is found at 19 to 85 (DGYLMVRAGR…IWTYEKNTCS (67 aa)). Intrachain disulfides connect Cys32–Cys84, Cys36–Cys57, Cys43–Cys64, and Cys47–Cys66.

The protein belongs to the long (4 C-C) scorpion toxin superfamily. Sodium channel inhibitor family. Beta subfamily. In terms of tissue distribution, expressed by the venom gland.

It is found in the secreted. In terms of biological role, binds voltage-independently at site-4 of sodium channels (Nav) and shift the voltage of activation toward more negative potentials thereby affecting sodium channel activation and promoting spontaneous and repetitive firing. The protein is Neurotoxin LmNaTx34.2 of Lychas mucronatus (Chinese swimming scorpion).